The primary structure comprises 389 residues: Flap endonuclease 1 (389 aa).

Residues methionine 1–arginine 105 form an N-domain region. Aspartate 34 serves as a coordination point for Mg(2+). Arginine 71 lines the DNA pocket. Aspartate 87, glutamate 159, glutamate 161, aspartate 180, and aspartate 182 together coordinate Mg(2+). An I-domain region spans residues glutamate 123–histidine 254. Glutamate 159 lines the DNA pocket. Positions 232 and 234 each coordinate DNA. Position 234 (aspartate 234) interacts with Mg(2+). The interaction with PCNA stretch occupies residues serine 338 to phenylalanine 346. The interval isoleucine 356–threonine 389 is disordered. Residues leucine 374 to threonine 389 show a composition bias toward basic residues.

This sequence belongs to the XPG/RAD2 endonuclease family. FEN1 subfamily. Interacts with PCNA. Three molecules of FEN1 bind to one PCNA trimer with each molecule binding to one PCNA monomer. PCNA stimulates the nuclease activity without altering cleavage specificity. Requires Mg(2+) as cofactor. In terms of processing, phosphorylated. Phosphorylation upon DNA damage induces relocalization to the nuclear plasma.

It localises to the nucleus. The protein resides in the nucleolus. The protein localises to the nucleoplasm. It is found in the mitochondrion. Its function is as follows. Structure-specific nuclease with 5'-flap endonuclease and 5'-3' exonuclease activities involved in DNA replication and repair. During DNA replication, cleaves the 5'-overhanging flap structure that is generated by displacement synthesis when DNA polymerase encounters the 5'-end of a downstream Okazaki fragment. It enters the flap from the 5'-end and then tracks to cleave the flap base, leaving a nick for ligation. Also involved in the long patch base excision repair (LP-BER) pathway, by cleaving within the apurinic/apyrimidinic (AP) site-terminated flap. Acts as a genome stabilization factor that prevents flaps from equilibrating into structures that lead to duplications and deletions. Also possesses 5'-3' exonuclease activity on nicked or gapped double-stranded DNA, and exhibits RNase H activity. Also involved in replication and repair of rDNA and in repairing mitochondrial DNA. The chain is Flap endonuclease 1 from Ostreococcus tauri.